Consider the following 96-residue polypeptide: Co-chaperonin GroES (96 aa).

It belongs to the GroES chaperonin family. Heptamer of 7 subunits arranged in a ring. Interacts with the chaperonin GroEL.

The protein localises to the cytoplasm. In terms of biological role, together with the chaperonin GroEL, plays an essential role in assisting protein folding. The GroEL-GroES system forms a nano-cage that allows encapsulation of the non-native substrate proteins and provides a physical environment optimized to promote and accelerate protein folding. GroES binds to the apical surface of the GroEL ring, thereby capping the opening of the GroEL channel. The chain is Co-chaperonin GroES from Actinobacillus pleuropneumoniae serotype 5b (strain L20).